Consider the following 504-residue polypeptide: ATP synthase subunit alpha (504 aa).

171 to 178 (GDRATGKT) provides a ligand contact to ATP.

The protein belongs to the ATPase alpha/beta chains family. As to quaternary structure, F-type ATPases have 2 components, CF(1) - the catalytic core - and CF(0) - the membrane proton channel. CF(1) has five subunits: alpha(3), beta(3), gamma(1), delta(1), epsilon(1). CF(0) has three main subunits: a(1), b(2) and c(9-12). The alpha and beta chains form an alternating ring which encloses part of the gamma chain. CF(1) is attached to CF(0) by a central stalk formed by the gamma and epsilon chains, while a peripheral stalk is formed by the delta and b chains.

It is found in the cell inner membrane. The enzyme catalyses ATP + H2O + 4 H(+)(in) = ADP + phosphate + 5 H(+)(out). Functionally, produces ATP from ADP in the presence of a proton gradient across the membrane. The alpha chain is a regulatory subunit. The protein is ATP synthase subunit alpha of Sulfurihydrogenibium sp. (strain YO3AOP1).